A 506-amino-acid chain; its full sequence is MPTIRPDEISTIIKQQIEQYNQEMQVSNVGTVLQVGDGIARIYGLDKVMASELLEFEDGTTGIALNLEEDNIGAVLIGSGRNIQEGSTVKSTGKIASIPVGEALLGRVVDPLCNPLDGKGPIQCTESRLIESPAPGIVDRRSVYEPLQTGITAIDALIPIGRGQRELIIGDRQTGKTTVAVDTILNQKGQDVICIYVAIGQKQSTIAQVVGILTERGAMDYSIVVAAGADSPAPLQWLAPYCGATIAEYFMYQGKHTLVVYDDLSKQAVAYRQMSLLLRRPPGREAYPGDVFYLHSRLLERAAKLSSQLGEGSMTALPIVETQANDVSAYIPTNVISITDGQIFLESDLFNAGIRPAINVGISVSRVGSAAQTKAMKKVAGSIKVELAQYRDLEAFAQFASDLDEATQKQLARGQRLQELLKQPQYSPLSLDQQVAIIYAGTRGYLDDIPVEKVSSFKQGLLAYLGTTHPKYGEIVLSTKQLTDEAEEILKTAITEFKQSFVAKAA.

170–177 (GDRQTGKT) lines the ATP pocket.

It belongs to the ATPase alpha/beta chains family. As to quaternary structure, F-type ATPases have 2 components, CF(1) - the catalytic core - and CF(0) - the membrane proton channel. CF(1) has five subunits: alpha(3), beta(3), gamma(1), delta(1), epsilon(1). CF(0) has four main subunits: a(1), b(1), b'(1) and c(9-12).

The protein resides in the cellular thylakoid membrane. The catalysed reaction is ATP + H2O + 4 H(+)(in) = ADP + phosphate + 5 H(+)(out). Produces ATP from ADP in the presence of a proton gradient across the membrane. The alpha chain is a regulatory subunit. The sequence is that of ATP synthase subunit alpha from Synechococcus sp. (strain JA-2-3B'a(2-13)) (Cyanobacteria bacterium Yellowstone B-Prime).